The sequence spans 289 residues: Phospholipase C (289 aa).

A signal peptide spans 1 to 25 (MKFKKVVLGMCLIASVLVFPVTIKA). A propeptide spanning residues 26 to 51 (NACCDEYLQTPAAPHDIDSKLPHKLS) is cleaved from the precursor. 9 residues coordinate Zn(2+): Trp52, His65, Asp106, His120, His169, Asp173, His179, His193, and Glu197. The Zn-dependent PLC domain occupies 52–289 (WSADNPTNTD…LEFWSKKTNE (238 aa)).

Belongs to the bacterial zinc-metallophospholipase C family. In terms of assembly, forms monomers, dimers and higher order oligomers, but only the monomer is enzymatically active. The cofactor is Zn(2+).

The protein localises to the secreted. The catalysed reaction is a 1,2-diacyl-sn-glycero-3-phosphocholine + H2O = phosphocholine + a 1,2-diacyl-sn-glycerol + H(+). It carries out the reaction 1,2-dihexadecanoyl-sn-glycero-3-phosphocholine + H2O = 1,2-dihexadecanoyl-sn-glycerol + phosphocholine + H(+). The enzyme catalyses 1-hexadecanoyl-2-(9Z-octadecenoyl)-sn-glycero-3-phosphocholine + H2O = 1-hexadecanoyl-2-(9Z-octadecenoyl)-sn-glycerol + phosphocholine + H(+). It catalyses the reaction 1,2-di-(9Z-octadecenoyl)-sn-glycero-3-phosphocholine + H2O = 1,2-di-(9Z-octadecenoyl)-sn-glycerol + phosphocholine + H(+). The catalysed reaction is a 1,2-diacyl-sn-glycero-3-phosphoethanolamine + H2O = phosphoethanolamine + a 1,2-diacyl-sn-glycerol + H(+). It carries out the reaction 1,2-di-(9Z-octadecenoyl)-sn-glycero-3-phosphoethanolamine + H2O = phosphoethanolamine + 1,2-di-(9Z-octadecenoyl)-sn-glycerol + H(+). The enzyme catalyses 1,2-dihexadecanoyl-sn-glycero-3-phosphoethanolamine + H2O = 1,2-dihexadecanoyl-sn-glycerol + phosphoethanolamine + H(+). It catalyses the reaction a 1,2-diacyl-sn-glycero-3-phospho-L-serine + H2O = O-phospho-L-serine + a 1,2-diacyl-sn-glycerol + H(+). The catalysed reaction is a 1,2-diacyl-sn-glycero-3-phosphoglycerol + H2O = glycerol 1-phosphate + a 1,2-diacyl-sn-glycerol + H(+). It carries out the reaction a 1,2-diacyl-sn-glycero-3-phospho-(1D-myo-inositol) + H2O = 1D-myo-inositol 1-phosphate + a 1,2-diacyl-sn-glycerol + H(+). The enzyme catalyses a sphingomyelin + H2O = phosphocholine + an N-acylsphing-4-enine + H(+). It catalyses the reaction a 1-O-(1Z-alkenyl)-2-acyl-sn-glycero-3-phosphoethanolamine + H2O = a 1-O-(1Z-alkenyl)-2-acyl-sn-glycerol + phosphoethanolamine + H(+). With respect to regulation, enzymatic activity of LmPC-PLC can be specifically inhibited by its propeptide added in trans. The tendency of the enzyme to oligomerize, which appears to largely attenuate the enzymatic activity, may be one of the mechanisms regulating phospholipase activity in the host cell during the different steps of the infection cycle of L.monocytogenes. Enzyme activity is inhibited by EDTA and o-phenanthroline in vitro. In terms of biological role, major virulence factor whose phospholipase activity facilitates pore formation by the pore-forming toxin listeriolysin O (LLO), leading to vacuolar membrane disruption and vacuolar escape of L.monocytogenes, which enables the bacterium to spread in the host. Acts as a phospholipase C exhibiting broad substrate specificity, with the highest activities towards diacylglycerophospholipids with phosphocholine, phosphoserine, and phosphoethanolamine head groups, but less towards phosphoglycerol or phosphoinositol head groups. Is also able to hydrolyze sphingomyelin and plasmenylethanolamine. In Listeria monocytogenes serovar 1/2a (strain ATCC BAA-679 / EGD-e), this protein is Phospholipase C.